We begin with the raw amino-acid sequence, 557 residues long: Probable phenylalanine--tRNA ligase beta subunit (557 aa).

Residues M276 to R352 enclose the B5 domain. 4 residues coordinate Mg(2+): D330, D336, E339, and D340.

This sequence belongs to the phenylalanyl-tRNA synthetase beta subunit family. Type 2 subfamily. In terms of assembly, tetramer of two alpha and two beta subunits. Requires Mg(2+) as cofactor.

Its subcellular location is the cytoplasm. The enzyme catalyses tRNA(Phe) + L-phenylalanine + ATP = L-phenylalanyl-tRNA(Phe) + AMP + diphosphate + H(+). The chain is Probable phenylalanine--tRNA ligase beta subunit from Encephalitozoon cuniculi (strain GB-M1) (Microsporidian parasite).